A 64-amino-acid chain; its full sequence is UPF0337 protein SAR0874 (64 aa).

Residues 1-40 (MADESKFEQAKGNVKETVGNVTDNKNLENEGKEDKASGKA) form a disordered region. The span at 25 to 40 (KNLENEGKEDKASGKA) shows a compositional bias: basic and acidic residues.

This sequence belongs to the UPF0337 (CsbD) family.

The sequence is that of UPF0337 protein SAR0874 from Staphylococcus aureus (strain MRSA252).